The chain runs to 711 residues: Ribosomal RNA large subunit methyltransferase K/L (711 aa).

Positions 43 to 154 (LAYRITLWTR…NGVITIAMNF (112 aa)) constitute a THUMP domain.

It belongs to the methyltransferase superfamily. RlmKL family.

Its subcellular location is the cytoplasm. It carries out the reaction guanosine(2445) in 23S rRNA + S-adenosyl-L-methionine = N(2)-methylguanosine(2445) in 23S rRNA + S-adenosyl-L-homocysteine + H(+). The catalysed reaction is guanosine(2069) in 23S rRNA + S-adenosyl-L-methionine = N(2)-methylguanosine(2069) in 23S rRNA + S-adenosyl-L-homocysteine + H(+). Specifically methylates the guanine in position 2445 (m2G2445) and the guanine in position 2069 (m7G2069) of 23S rRNA. The sequence is that of Ribosomal RNA large subunit methyltransferase K/L from Shewanella oneidensis (strain ATCC 700550 / JCM 31522 / CIP 106686 / LMG 19005 / NCIMB 14063 / MR-1).